The primary structure comprises 238 residues: Small heat shock protein, chloroplastic (238 aa).

The tract at residues 31–87 is disordered; the sequence is APLSTGGRTRPLSVASAAQENRDNSVDVQVSQAQNAGNQQGNAVQRRPRRAGFDISP. Over residues 58 to 75 the composition is skewed to low complexity; that stretch reads VQVSQAQNAGNQQGNAVQ. Positions 124 to 238 constitute a sHSP domain; the sequence is AARARRRMPW…ERKVIDVQVQ (115 aa).

This sequence belongs to the small heat shock protein (HSP20) family.

It is found in the plastid. Its subcellular location is the chloroplast. The sequence is that of Small heat shock protein, chloroplastic (HSP21) from Triticum aestivum (Wheat).